Here is a 2325-residue protein sequence, read N- to C-terminus: Protein sidekick homolog (2325 aa).

The N-terminal stretch at 1–26 (MRNRLLLIFYTTTVLWTIGYTQLVLG) is a signal peptide. Over 27–2019 (KPPIFQDGGS…IPDDPFYTTW (1993 aa)) the chain is Extracellular. Ig-like C2-type domains lie at 28–105 (PPIF…AAIS), 217–319 (PSLQ…AYMT), and 324–397 (PILK…ADLA). Disulfide bonds link cysteine 52–cysteine 94, cysteine 247–cysteine 301, and cysteine 345–cysteine 386. A glycan (N-linked (GlcNAc...) asparagine) is linked at asparagine 407. Ig-like C2-type domains are found at residues 456-544 (PSQK…VQVN) and 547-638 (SLIE…AMLQ). Disulfide bonds link cysteine 480-cysteine 528 and cysteine 568-cysteine 622. Asparagine 632, asparagine 655, asparagine 807, asparagine 868, asparagine 932, and asparagine 1016 each carry an N-linked (GlcNAc...) asparagine glycan. 13 Fibronectin type-III domains span residues 645 to 751 (MPER…MPQQ), 756 to 853 (APRN…TSEG), 858 to 957 (APKN…TEED), 961 to 1055 (SVDE…VPPE), 1059 to 1154 (RPSM…TLQT), 1159 to 1254 (PSQR…TYES), 1259 to 1359 (SPRN…TMED), 1363 to 1457 (PPES…SSVR), 1463 to 1566 (APAP…TLPS), 1571 to 1671 (QPIS…VGYS), 1673 to 1775 (PKRN…DKPG), 1776 to 1872 (PVGI…SKDG), and 1873 to 2004 (PPPP…TEQL). The segment at 1036 to 1059 (TRKGDGPVEETKFESGVPPELPGR) is disordered. A compositionally biased stretch (basic and acidic residues) spans 1037 to 1048 (RKGDGPVEETKF). Residue asparagine 1107 is glycosylated (N-linked (GlcNAc...) asparagine). Residues 1137-1161 (KGRGAPSEPSRSFETLQTNPDTPSQ) are disordered. Over residues 1145–1161 (PSRSFETLQTNPDTPSQ) the composition is skewed to polar residues. N-linked (GlcNAc...) asparagine glycosylation is present at asparagine 1614. Disordered regions lie at residues 1857 to 1884 (GEQR…ITSG) and 1918 to 1947 (PANG…ATST). N-linked (GlcNAc...) asparagine glycosylation is present at asparagine 1863. The span at 1935–1947 (AKSAAQTAAATST) shows a compositional bias: low complexity. Residues 2020 to 2040 (WFMALVAMGAFVLIVIIIAIL) traverse the membrane as a helical segment. The Cytoplasmic portion of the chain corresponds to 2041-2325 (CVTGSSAKYR…NLTTGFSSFV (285 aa)). 4 disordered regions span residues 2080-2113 (NMTR…SVLG), 2164-2187 (TAYV…PTRS), 2202-2226 (RGHI…LQQP), and 2285-2325 (ILTG…SSFV). The segment covering 2091 to 2100 (PGTTQSWVSD) has biased composition (polar residues). Over residues 2215-2226 (GSQPQGSPLQQP) the composition is skewed to low complexity. 2 stretches are compositionally biased toward polar residues: residues 2294-2305 (AGRSSTTDSTSE) and 2313-2325 (ATPN…SSFV).

It belongs to the sidekick family.

The protein localises to the membrane. Functionally, cell adhesion protein. The chain is Protein sidekick homolog (rig-4) from Caenorhabditis elegans.